The primary structure comprises 102 residues: Large ribosomal subunit protein uL24 (102 aa).

This sequence belongs to the universal ribosomal protein uL24 family. As to quaternary structure, part of the 50S ribosomal subunit.

Functionally, one of two assembly initiator proteins, it binds directly to the 5'-end of the 23S rRNA, where it nucleates assembly of the 50S subunit. Its function is as follows. One of the proteins that surrounds the polypeptide exit tunnel on the outside of the subunit. The chain is Large ribosomal subunit protein uL24 from Cupriavidus pinatubonensis (strain JMP 134 / LMG 1197) (Cupriavidus necator (strain JMP 134)).